The sequence spans 341 residues: NADH-quinone oxidoreductase subunit H (341 aa).

A run of 8 helical transmembrane segments spans residues 38-58, 70-90, 115-135, 161-181, 187-207, 239-259, 275-295, and 314-334; these read PSVV…KLLV, ILFI…WAVI, IGVL…IVAG, MGLI…GEMV, MPFW…ISLL, LFFL…TIFF, IPGL…FVWT, and VFLP…LFTG.

The protein belongs to the complex I subunit 1 family. In terms of assembly, NDH-1 is composed of 14 different subunits. Subunits NuoA, H, J, K, L, M, N constitute the membrane sector of the complex.

Its subcellular location is the cell membrane. The catalysed reaction is a quinone + NADH + 5 H(+)(in) = a quinol + NAD(+) + 4 H(+)(out). Functionally, NDH-1 shuttles electrons from NADH, via FMN and iron-sulfur (Fe-S) centers, to quinones in the respiratory chain. The immediate electron acceptor for the enzyme in this species is believed to be ubiquinone. Couples the redox reaction to proton translocation (for every two electrons transferred, four hydrogen ions are translocated across the cytoplasmic membrane), and thus conserves the redox energy in a proton gradient. This subunit may bind ubiquinone. This Wolbachia sp. subsp. Brugia malayi (strain TRS) protein is NADH-quinone oxidoreductase subunit H.